We begin with the raw amino-acid sequence, 249 residues long: MAKTQCPLVFSLLALALIGTLQSSAAQCQNSNQFLGSLEITGKYRKAVVSIHNYYRNLTAAGEAGEYYKQPPAENMLQLTWDDDAASKAVELANTCVFGHDGAKDKDDKPMGQNIALKMSSTQSDVNKSYDEWMTGMVKDWFDEVKDYSFGSGFSSGTGHYTQIVWANTSKVGCGYSYYKEGTWYAGYLVCNYKPPGNWYGQDPYIQGNVNCEKHNLGRSKNYNNLCVTKRKKKNNKSGSTQRTNFQEK.

The signal sequence occupies residues 1–26 (MAKTQCPLVFSLLALALIGTLQSSAA). Residues 50–193 (SIHNYYRNLT…WYAGYLVCNY (144 aa)) form the SCP domain. Asn57, Asn127, and Asn168 each carry an N-linked (GlcNAc...) asparagine glycan.

Belongs to the CRISP family. Venom allergen 5-like subfamily. As to quaternary structure, monomeric in solution. Requires Cu(2+) as cofactor. Saliva (at protein level). Salivary gland (at protein level).

It is found in the secreted. Antioxidant protein that scavenges superoxide radicals. Removes superoxide radicals produced by PMA-stimulated host neutrophils. Inhibits host platelet aggregation induced by low doses of collagen by interfering with the pro-aggregatory properties of reactive oxygen species on platelets. Binds to heparin and sulfated glycosaminoglycans. This chain is Salivary antigen-5, found in Dipetalogaster maximus (Blood-sucking bug).